Here is a 122-residue protein sequence, read N- to C-terminus: Large ribosomal subunit protein uL14 (122 aa).

This sequence belongs to the universal ribosomal protein uL14 family. As to quaternary structure, part of the 50S ribosomal subunit. Forms a cluster with proteins L3 and L19. In the 70S ribosome, L14 and L19 interact and together make contacts with the 16S rRNA in bridges B5 and B8.

Binds to 23S rRNA. Forms part of two intersubunit bridges in the 70S ribosome. This is Large ribosomal subunit protein uL14 from Xanthomonas oryzae pv. oryzae (strain MAFF 311018).